Consider the following 135-residue polypeptide: Crustacean hyperglycemic hormones A* (135 aa).

Residues 1–26 form the signal peptide; that stretch reads MVSFRTMWSVVVVVVVASLASSGVQG. The residue at position 62 (Gln-62) is a Pyrrolidone carboxylic acid. 3 disulfide bridges follow: Cys-68/Cys-104, Cys-84/Cys-100, and Cys-87/Cys-113. Val-133 is subject to Valine amide.

It belongs to the arthropod CHH/MIH/GIH/VIH hormone family. Produced by the medulla terminalis X-organ in the eyestalks and transported to the sinus gland where they are stored and released.

It localises to the secreted. Functionally, hormone found in the sinus gland of isopods and decapods which controls the blood sugar level. Has a secretagogue action over the amylase released from the midgut gland. May act as a stress hormone and may be involved in the control of molting and reproduction. The sequence is that of Crustacean hyperglycemic hormones A* (CHHA*) from Faxonius limosus (Spinycheek crayfish).